The sequence spans 447 residues: ATP-dependent protease ATPase subunit HslU (447 aa).

Residues isoleucine 17, 59 to 64 (GVGKTE), aspartate 256, glutamate 321, and arginine 393 each bind ATP.

This sequence belongs to the ClpX chaperone family. HslU subfamily. As to quaternary structure, a double ring-shaped homohexamer of HslV is capped on each side by a ring-shaped HslU homohexamer. The assembly of the HslU/HslV complex is dependent on binding of ATP.

It is found in the cytoplasm. ATPase subunit of a proteasome-like degradation complex; this subunit has chaperone activity. The binding of ATP and its subsequent hydrolysis by HslU are essential for unfolding of protein substrates subsequently hydrolyzed by HslV. HslU recognizes the N-terminal part of its protein substrates and unfolds these before they are guided to HslV for hydrolysis. The polypeptide is ATP-dependent protease ATPase subunit HslU (Pseudomonas putida (strain GB-1)).